The sequence spans 1888 residues: E3 ubiquitin-protein ligase UPL3 (1888 aa).

Residues methionine 1–glutamate 10 are compositionally biased toward basic and acidic residues. Residues methionine 1–serine 157 are disordered. Over residues leucine 41–serine 81 the composition is skewed to low complexity. Residues asparagine 97–leucine 124 are compositionally biased toward basic and acidic residues. Residues aspartate 137 to aspartate 146 are compositionally biased toward acidic residues. 4 ARM repeats span residues glutamate 227 to aspartate 267, proline 270 to glutamine 310, histidine 312 to lysine 349, and leucine 351 to glutamate 390. Disordered stretches follow at residues lysine 660–asparagine 711, alanine 970–cysteine 1119, aspartate 1134–alanine 1157, and arginine 1280–glutamine 1307. Residues proline 986–threonine 1002 are compositionally biased toward low complexity. Residues threonine 1019 to glycine 1029 are compositionally biased toward basic and acidic residues. Positions serine 1076 to aspartate 1113 are enriched in acidic residues. Composition is skewed to low complexity over residues alanine 1148 to alanine 1157 and alanine 1286 to serine 1303. The K-box stretch occupies residues alanine 1377–glycine 1451. Positions methionine 1490–serine 1888 constitute an HECT domain. The Glycyl thioester intermediate role is filled by cysteine 1855.

The protein belongs to the UPL family. K-HECT subfamily. In terms of tissue distribution, widely expressed.

The enzyme catalyses S-ubiquitinyl-[E2 ubiquitin-conjugating enzyme]-L-cysteine + [acceptor protein]-L-lysine = [E2 ubiquitin-conjugating enzyme]-L-cysteine + N(6)-ubiquitinyl-[acceptor protein]-L-lysine.. Its pathway is protein modification; protein ubiquitination. Its function is as follows. Probable E3 ubiquitin-protein ligase which mediates ubiquitination and subsequent proteasomal degradation of target proteins. Involved in the repression of endoreduplication process and the cell morphogenesis in the trichomes. This Arabidopsis thaliana (Mouse-ear cress) protein is E3 ubiquitin-protein ligase UPL3 (UPL3).